Here is a 603-residue protein sequence, read N- to C-terminus: uncharacterized protein (603 aa).

Positions 1–93 (MSFVIAAPET…AGAYASAEAA (93 aa)) constitute a PE domain. Residues 309 to 333 (GIFTGNGGTGGTGGTGTGNQLVGGE) form a disordered region.

Belongs to the mycobacterial PE family. PGRS subfamily.

This is an uncharacterized protein from Mycobacterium tuberculosis (strain CDC 1551 / Oshkosh).